The sequence spans 189 residues: MEFKATELRLGLPGITEEEEKKIIHGSSVVKNNNKRQLPQTSEESVSISKVTNDEHIVESSSAAPPAKAKIVGWPPIRSYRKNSLHEADVGGIFVKVSMDGAPYLRKIDLRVYGGYSELLKALETMFKLTIGEYSEREGYKGSEYAPTYEDKDGDWMLVGDVPWDMFVTSCKRLRIMKGTEAKGLGCGV.

The EAR-like (transcriptional repression) signature appears at 8–12; it reads LRLGL. The region spanning 92–179 is the PB1 domain; it reads GIFVKVSMDG…SCKRLRIMKG (88 aa).

This sequence belongs to the Aux/IAA family. In terms of assembly, homodimers and heterodimers. Phosphorylated by phytochrome A in vitro.

It is found in the nucleus. In terms of biological role, aux/IAA proteins are short-lived transcriptional factors that function as repressors of early auxin response genes at low auxin concentrations. Repression is thought to result from the interaction with auxin response factors (ARFs), proteins that bind to the auxin-responsive promoter element (AuxRE). Formation of heterodimers with ARF proteins may alter their ability to modulate early auxin response genes expression. This is Auxin-induced protein IAA4 (IAA4/5) from Pisum sativum (Garden pea).